We begin with the raw amino-acid sequence, 212 residues long: ATP-dependent dethiobiotin synthetase BioD (212 aa).

Residue Gly13 to Val18 participates in ATP binding. Residue Thr17 coordinates Mg(2+). Lys33 is a catalytic residue. A Mg(2+)-binding site is contributed by Glu100. Residues Glu100–Gly103 and Pro184–Leu186 contribute to the ATP site.

This sequence belongs to the dethiobiotin synthetase family. Homodimer. Requires Mg(2+) as cofactor.

It is found in the cytoplasm. The catalysed reaction is (7R,8S)-7,8-diammoniononanoate + CO2 + ATP = (4R,5S)-dethiobiotin + ADP + phosphate + 3 H(+). The protein operates within cofactor biosynthesis; biotin biosynthesis; biotin from 7,8-diaminononanoate: step 1/2. Its function is as follows. Catalyzes a mechanistically unusual reaction, the ATP-dependent insertion of CO2 between the N7 and N8 nitrogen atoms of 7,8-diaminopelargonic acid (DAPA, also called 7,8-diammoniononanoate) to form a ureido ring. This chain is ATP-dependent dethiobiotin synthetase BioD, found in Rhodopseudomonas palustris (strain BisB5).